A 63-amino-acid chain; its full sequence is MPKMKSVKSAVKRFKVGKNKIKRGSAFRSHILTKKPAKRMRNLRTAKYVHSTNVKAVEKMLGI.

The protein belongs to the bacterial ribosomal protein bL35 family.

The polypeptide is Large ribosomal subunit protein bL35 (Campylobacter jejuni subsp. doylei (strain ATCC BAA-1458 / RM4099 / 269.97)).